A 452-amino-acid polypeptide reads, in one-letter code: MNKVNQILEEKVMPIAGRIAGQRHLQALRDGIILTMPLIIIGSFFLIIGNLPIPGYAEFMAKTFGSSWSEKLAYPVDATFEIMGLVAAFGIAYRLAEKYGVDALSAGAISLAAFLLATPYQVPFMPDGATKEIMVGGGIPLSLMGSKGLFVAMIIAMVSTEIYRLIIQRNLVFKMPDGVPPAVSKSFVALIPGFAVIFLIWAARLIVEATPFESLHNIVSVLLGTPLSILGGSLGGSLVAEAVKMLLWACGLHGANIVGGVMAPIWYGAMDANRIAFQAGEELPKIFTQQFFDIWVNIGGSGATLALVVTMFLRARSKQMKQLGKLAVGPAIFNINEPIIFGMPIVMNPMLLLPFIITPLVTVTLTYIGMSTGLVAKPAGIAVPWTMPPIFSGYLATGGKVSGAVMQAINIAVSFVVYYPFFRMWDKQKLKEENDLELVQTPAATDDKEAAL.

Residues 8–421 (LEEKVMPIAG…AVSFVVYYPF (414 aa)) form the PTS EIIC type-3 domain. 10 helical membrane passes run 31-51 (GIILTMPLIIIGSFFLIIGNL), 72-92 (LAYPVDATFEIMGLVAAFGIA), 104-124 (LSAGAISLAAFLLATPYQVPF), 138-158 (GIPLSLMGSKGLFVAMIIAMV), 187-207 (FVALIPGFAVIFLIWAARLIV), 218-238 (IVSVLLGTPLSILGGSLGGSL), 246-266 (LLWACGLHGANIVGGVMAPIW), 291-311 (FFDIWVNIGGSGATLALVVTM), 351-373 (LLLPFIITPLVTVTLTYIGMSTG), and 402-422 (SGAVMQAINIAVSFVVYYPFF).

Its subcellular location is the cell membrane. Functionally, the phosphoenolpyruvate-dependent sugar phosphotransferase system (PTS), a major carbohydrate active -transport system, catalyzes the phosphorylation of incoming sugar substrates concomitant with their translocation across the cell membrane. This system is involved in lichenan transport. This chain is Lichenan permease IIC component (licC), found in Bacillus subtilis (strain 168).